Reading from the N-terminus, the 43-residue chain is Ferritin light chain (43 aa).

Positions 1–43 (MEAALLVEKNLNQALLDLHGLASARGDPHICDFLENHFLDEEV) constitute a Ferritin-like diiron domain.

Belongs to the ferritin family. In terms of assembly, oligomer of 24 subunits. There are two types of subunits: L (light) chain and H (heavy) chain. The major chain can be light or heavy, depending on the species and tissue type. The functional molecule forms a roughly spherical shell with a diameter of 12 nm and contains a central cavity into which the insoluble mineral iron core is deposited. Interacts with NCOA4.

Its subcellular location is the cytoplasmic vesicle. It localises to the autophagosome. The protein localises to the cytoplasm. It is found in the autolysosome. Stores iron in a soluble, non-toxic, readily available form. Important for iron homeostasis. Iron is taken up in the ferrous form and deposited as ferric hydroxides after oxidation. Also plays a role in delivery of iron to cells. Mediates iron uptake in capsule cells of the developing kidney. Delivery to lysosomes by the cargo receptor NCOA4 for autophagic degradation and release or iron. In Ovis aries (Sheep), this protein is Ferritin light chain (FTL).